A 449-amino-acid chain; its full sequence is Gamma-aminobutyric acid receptor subunit delta (449 aa).

A signal peptide spans 1 to 24 (MDVLGWLLLPLLLLCTQPHHGARA). Residues 25-251 (MNDIGDYVGS…QLRRNRGVYI (227 aa)) are Extracellular-facing. N-linked (GlcNAc...) asparagine glycosylation is found at Asn-103 and Asn-106. Cys-164 and Cys-178 form a disulfide bridge. Residues 252–271 (IQSYMPSVLLVAMSWVSFWI) traverse the membrane as a helical segment. Residues 272–275 (SQAA) are Cytoplasmic-facing. A helical transmembrane segment spans residues 276–298 (VPARVSLGITTVLTMTTLMVSAR). Residues 299-308 (SSLPRASAIK) are Extracellular-facing. Residues 309–331 (ALDVYFWICYVFVFAALVEYAFA) traverse the membrane as a helical segment. Residues 332–423 (HFNADYRKKR…SRLKPIDADT (92 aa)) lie on the Cytoplasmic side of the membrane. A Phosphoserine modification is found at Ser-390. A helical transmembrane segment spans residues 424–446 (IDIYARAVFPAAFAAVNIIYWAA). Over 447 to 449 (YTM) the chain is Extracellular.

The protein belongs to the ligand-gated ion channel (TC 1.A.9) family. Gamma-aminobutyric acid receptor (TC 1.A.9.5) subfamily. GABRD sub-subfamily. As to quaternary structure, heteropentamer, formed by a combination of alpha (GABRA1-6), beta (GABRB1-3), gamma (GABRG1-3), delta (GABRD), epsilon (GABRE), rho (GABRR1-3), pi (GABRP) and theta (GABRQ) chains, each subunit exhibiting distinct physiological and pharmacological properties. In terms of tissue distribution, found in the brain, in cerebellar granule cells. Expressed in lungs, in alveolar epithelium.

It is found in the cell membrane. It carries out the reaction chloride(in) = chloride(out). Delta subunit of the heteropentameric ligand-gated chloride channel gated by gamma-aminobutyric acid (GABA), a major inhibitory neurotransmitter in the brain. GABA-gated chloride channels, also named GABA(A) receptors (GABAAR), consist of five subunits arranged around a central pore and contain GABA active binding site(s) located at the alpha and beta subunit interface(s). When activated by GABA, GABAARs selectively allow the flow of chloride anions across the cell membrane down their electrochemical gradient. GABAARs containing delta/GABRD subunits are predominantly expressed and located in extrasynaptic or perisynaptic positions on hippocampus and cerebellar granule cells, and contribute to the tonic GABAergic inhibition. GABAAR containing alpha-4-beta-3-delta subunits can simultaneously bind GABA and histamine where histamine binds at the interface of two neighboring beta subunits, which may be involved in the regulation of sleep and wakefulness. This chain is Gamma-aminobutyric acid receptor subunit delta, found in Rattus norvegicus (Rat).